The sequence spans 439 residues: MSKTMAMNLLEDWCRGMEVDIHRSLLVTGIPEDCGQAEIEETLNGVLSPLGPYRVLNKIFVREENVKAALIEVGEGVNLSTIPREFPGRGGVWRVVCRDPTQDAEFLKNLNEFLDAEGRTWEDVVRLLQLNHPTLSQNQHQPPENWAEALGVLLGAVVQIIFCMDAEIRSREEARAQEAAEFEEMAAWALAAGRKVKKEPGLAAEVGSALKAETPNNWNATEDQHEPTKPLVRRAGAKSRSRRKKQKKNSRQEAVPWKKPKGINSNSTANLEDPEVGDAESMAISEPIKGSRKPCVNKEELALKKPMAKCAWKGPREPPQDARAEAESPGGASESDQDGGHESPPKKKAVAWVSAKNPAPMRKKKKVSLGPVSYVLVDSEDGRKKPVMPKKGPGSRREASDQKAPRGQQPAEATASTSRGPKAKPEGSPRRATNESRKV.

The segment at 208 to 439 (SALKAETPNN…RRATNESRKV (232 aa)) is disordered. Over residues 231-249 (LVRRAGAKSRSRRKKQKKN) the composition is skewed to basic residues. Basic and acidic residues-rich tracts occupy residues 314-326 (GPREPPQDARAEA), 395-404 (SRREASDQKA), and 423-439 (AKPEGSPRRATNESRKV).

This sequence belongs to the PNMA family.

This is Paraneoplastic antigen-like protein 8A from Homo sapiens (Human).